The primary structure comprises 374 residues: MAANDRATTPGKSGQGTGNEALMRASLSAVAPGMALRDGLERILRGNTGGLIVLGMDKTVESMCTGGFVLDVEFTATRLRELCKLDGALILDKDMTKILRAGVQLVPDASIHTEETGTRHRTADRVSKACGFPVVSVSQSMRLIALYVDGERRVLEESSAILSRANQALATLERYKLRLDEVAGTLSALEIEDLVTVRDVTAVAQRLEMVRRIATEIAEYVVELGTDGRLLSLQLDELIAGVEPERELVVRDYVPEPTAKRSRTVAEALTELDALSHTELLELPVVARALGYSGSPETLDSAVSPRGFRLLAKVPRLPGAIIERLVEHFGGLQKLLAASVDDLQTVDGVGEARARSVREGLSRLAESSILERYV.

The region spanning Glu-20 to Ser-158 is the DAC domain. Residues Gly-87, Leu-105, and Thr-118 to Thr-122 contribute to the ATP site.

This sequence belongs to the DisA family. In terms of assembly, homooctamer. It depends on Mg(2+) as a cofactor.

The catalysed reaction is 2 ATP = 3',3'-c-di-AMP + 2 diphosphate. Functionally, participates in a DNA-damage check-point that is active prior to asymmetric division when DNA is damaged. DisA forms globular foci that rapidly scan along the chromosomes during sporulation, searching for lesions. When a lesion is present, DisA pauses at the lesion site. This triggers a cellular response that culminates in a temporary block in sporulation initiation. Its function is as follows. Also has diadenylate cyclase activity, catalyzing the condensation of 2 ATP molecules into cyclic di-AMP (c-di-AMP). c-di-AMP acts as a signaling molecule that couples DNA integrity with progression of sporulation. The rise in c-di-AMP level generated by DisA while scanning the chromosome, operates as a positive signal that advances sporulation; upon encountering a lesion, the DisA focus arrests at the damaged site and halts c-di-AMP synthesis. This chain is DNA integrity scanning protein DisA, found in Streptomyces griseus subsp. griseus (strain JCM 4626 / CBS 651.72 / NBRC 13350 / KCC S-0626 / ISP 5235).